The chain runs to 252 residues: Enolase-phosphatase E1 (252 aa).

Residues Asp14 and Glu16 each contribute to the Mg(2+) site. Residues 143-144 (SS) and Lys177 each bind substrate. Residue Asp202 participates in Mg(2+) binding.

The protein belongs to the HAD-like hydrolase superfamily. MasA/MtnC family. As to quaternary structure, monomer. Mg(2+) is required as a cofactor.

Its subcellular location is the cytoplasm. It localises to the nucleus. The enzyme catalyses 5-methylsulfanyl-2,3-dioxopentyl phosphate + H2O = 1,2-dihydroxy-5-(methylsulfanyl)pent-1-en-3-one + phosphate. The protein operates within amino-acid biosynthesis; L-methionine biosynthesis via salvage pathway; L-methionine from S-methyl-5-thio-alpha-D-ribose 1-phosphate: step 3/6. Its pathway is amino-acid biosynthesis; L-methionine biosynthesis via salvage pathway; L-methionine from S-methyl-5-thio-alpha-D-ribose 1-phosphate: step 4/6. Its function is as follows. Bifunctional enzyme that catalyzes the enolization of 2,3-diketo-5-methylthiopentyl-1-phosphate (DK-MTP-1-P) into the intermediate 2-hydroxy-3-keto-5-methylthiopentenyl-1-phosphate (HK-MTPenyl-1-P), which is then dephosphorylated to form the acireductone 1,2-dihydroxy-3-keto-5-methylthiopentene (DHK-MTPene). In Drosophila persimilis (Fruit fly), this protein is Enolase-phosphatase E1.